Here is a 425-residue protein sequence, read N- to C-terminus: Phosphomethylpyrimidine synthase (425 aa).

Substrate-binding positions include Met94, Tyr123, His162, 184 to 186 (SRG), 225 to 228 (NGMR), and Glu264. His268 is a Zn(2+) binding site. Tyr291 is a binding site for substrate. His332 is a binding site for Zn(2+). Residues Cys407, Cys410, and Cys414 each coordinate [4Fe-4S] cluster.

This sequence belongs to the ThiC family. It depends on [4Fe-4S] cluster as a cofactor.

The catalysed reaction is 5-amino-1-(5-phospho-beta-D-ribosyl)imidazole + S-adenosyl-L-methionine = 4-amino-2-methyl-5-(phosphooxymethyl)pyrimidine + CO + 5'-deoxyadenosine + formate + L-methionine + 3 H(+). It participates in cofactor biosynthesis; thiamine diphosphate biosynthesis. Its function is as follows. Catalyzes the synthesis of the hydroxymethylpyrimidine phosphate (HMP-P) moiety of thiamine from aminoimidazole ribotide (AIR) in a radical S-adenosyl-L-methionine (SAM)-dependent reaction. The protein is Phosphomethylpyrimidine synthase of Methanoregula boonei (strain DSM 21154 / JCM 14090 / 6A8).